Consider the following 89-residue polypeptide: MSLNAEQTASILAEFGRCENDTGSTEVQVALLTAQINHLQGHFKEHKHDHHSRRGLLRMVNTRRKLLAYLKRTENVRYQELIKKLGLRR.

It belongs to the universal ribosomal protein uS15 family. As to quaternary structure, part of the 30S ribosomal subunit. Forms a bridge to the 50S subunit in the 70S ribosome, contacting the 23S rRNA.

One of the primary rRNA binding proteins, it binds directly to 16S rRNA where it helps nucleate assembly of the platform of the 30S subunit by binding and bridging several RNA helices of the 16S rRNA. Functionally, forms an intersubunit bridge (bridge B4) with the 23S rRNA of the 50S subunit in the ribosome. The chain is Small ribosomal subunit protein uS15 from Shewanella woodyi (strain ATCC 51908 / MS32).